Consider the following 279-residue polypeptide: 32 kDa beta-galactoside-binding lectin (279 aa).

2 consecutive Galectin domains span residues 13 to 144 and 152 to 279; these read YRSV…VHWG and YESG…IQIQ. 213 to 219 contacts a beta-D-galactoside; sequence WGNEERE.

The N-terminus is blocked.

Binds galactose. The sequence is that of 32 kDa beta-galactoside-binding lectin (lec-1) from Caenorhabditis elegans.